The following is a 352-amino-acid chain: Ion-translocating oxidoreductase complex subunit D (352 aa).

A run of 5 helical transmembrane segments spans residues 20–40 (IMLLVLLAAVPGIAAQLWFFG), 42–62 (GTLVQILLASVSALLAEALVL), 78–109 (ALLTGLLLAVSIPPLAPWWMVVLGTVFAVIIA), 123–143 (PAMIGYVVLLISFPVQMTSWL), and 148–168 (IAVNIPGFIDAIQVIFSGHTA). Position 187 is an FMN phosphoryl threonine (threonine 187). The next 4 helical transmembrane spans lie at 214 to 234 (ILAGAGWQWVNLAWLAGGVWL), 242 to 262 (WHIPLSFLVTLALCATLGWLF), 267 to 287 (LAAPQIHLLSGATMLGAFFIL), and 301 to 318 (LMFGALAGLLVWLIRSFG).

Belongs to the NqrB/RnfD family. The complex is composed of six subunits: RsxA, RsxB, RsxC, RsxD, RsxE and RsxG. FMN serves as cofactor.

It localises to the cell inner membrane. Functionally, part of a membrane-bound complex that couples electron transfer with translocation of ions across the membrane. Required to maintain the reduced state of SoxR. The chain is Ion-translocating oxidoreductase complex subunit D from Shigella flexneri serotype 5b (strain 8401).